Consider the following 290-residue polypeptide: MKIAVYGKGGIGKSTTSCNISIALARRGKKVLQIGCDPKHDSTFTLTGFLIPTIIDTLQSKDYHYEDVWPEDVIYKGYGGVDCVEAGGPPAGAGCGGYVVGETVKSLKELNAFYEYDIILFDVLGDVVCGGFAAPLNYADYCIIITDNGFDALFAANRIAASVREKAHTHPLRLAGLVGNRTSKRDLIDKYVEACPMPVLEVLPLIEDIRVSRVKGKTLFEMAESQPTLNYVCEFYLNIADQILSQPEGVVPKEIPDRELFSLLSDFYLNPINSGKNENIENNLHDFMII.

Residues 10-15 (GIGKST) and K39 each bind ATP. Residue S14 coordinates Mg(2+). C95 and C129 together coordinate [4Fe-4S] cluster. Position 180 to 181 (180 to 181 (NR)) interacts with ATP.

The protein belongs to the NifH/BchL/ChlL family. As to quaternary structure, homodimer. Protochlorophyllide reductase is composed of three subunits; ChlL, ChlN and ChlB. [4Fe-4S] cluster is required as a cofactor.

The protein localises to the plastid. It localises to the chloroplast. The enzyme catalyses chlorophyllide a + oxidized 2[4Fe-4S]-[ferredoxin] + 2 ADP + 2 phosphate = protochlorophyllide a + reduced 2[4Fe-4S]-[ferredoxin] + 2 ATP + 2 H2O. It participates in porphyrin-containing compound metabolism; chlorophyll biosynthesis (light-independent). In terms of biological role, component of the dark-operative protochlorophyllide reductase (DPOR) that uses Mg-ATP and reduced ferredoxin to reduce ring D of protochlorophyllide (Pchlide) to form chlorophyllide a (Chlide). This reaction is light-independent. The L component serves as a unique electron donor to the NB-component of the complex, and binds Mg-ATP. The polypeptide is Light-independent protochlorophyllide reductase iron-sulfur ATP-binding protein (Angiopteris evecta (Mule's foot fern)).